The sequence spans 64 residues: Epidermal growth factor (64 aa).

Positions methionine 1–alanine 21 are cleaved as a signal peptide. Glutamine 22 is modified (pyrrolidone carboxylic acid). The region spanning glycine 25–glutamine 61 is the EGF-like domain. 3 disulfide bridges follow: cysteine 29/cysteine 40, cysteine 34/cysteine 49, and cysteine 51/cysteine 60.

Albumen gland. Up-regulated in adult CNS after axotomy.

It is found in the secreted. Functionally, induces neurite outgrowth in specific adult neurons in vitro. This Lymnaea stagnalis (Great pond snail) protein is Epidermal growth factor.